The sequence spans 418 residues: Serine hydroxymethyltransferase (418 aa).

(6S)-5,6,7,8-tetrahydrofolate contacts are provided by residues L121 and 125-127 (GHL). K230 carries the N6-(pyridoxal phosphate)lysine modification. Residue 355-357 (SPF) participates in (6S)-5,6,7,8-tetrahydrofolate binding.

This sequence belongs to the SHMT family. Homodimer. It depends on pyridoxal 5'-phosphate as a cofactor.

It is found in the cytoplasm. The catalysed reaction is (6R)-5,10-methylene-5,6,7,8-tetrahydrofolate + glycine + H2O = (6S)-5,6,7,8-tetrahydrofolate + L-serine. The protein operates within one-carbon metabolism; tetrahydrofolate interconversion. It functions in the pathway amino-acid biosynthesis; glycine biosynthesis; glycine from L-serine: step 1/1. Catalyzes the reversible interconversion of serine and glycine with tetrahydrofolate (THF) serving as the one-carbon carrier. This reaction serves as the major source of one-carbon groups required for the biosynthesis of purines, thymidylate, methionine, and other important biomolecules. Also exhibits THF-independent aldolase activity toward beta-hydroxyamino acids, producing glycine and aldehydes, via a retro-aldol mechanism. The protein is Serine hydroxymethyltransferase of Streptococcus pyogenes serotype M49 (strain NZ131).